A 380-amino-acid chain; its full sequence is Cytochrome b (380 aa).

The next 4 membrane-spanning stretches (helical) occupy residues 34 to 54, 78 to 99, 114 to 134, and 179 to 199; these read FGSLLAVCLTTQILTGLLLAM, WLIRNLHANGASFFFICIFLHI, WNTGVILLLTLMATAFVGYVL, and FFALHFLLPFVITGITITHLM. Heme b is bound by residues His-84 and His-98. Heme b-binding residues include His-183 and His-197. His-202 provides a ligand contact to a ubiquinone. Transmembrane regions (helical) follow at residues 227–247, 289–309, 321–341, and 348–368; these read LKDILGLALMLTPFLTLALFS, LGGVLALAASVLILLLIPFLH, LSQALFWLLVANLLILTWVGS, and FIIIGQMASLSYFTILLILFP.

This sequence belongs to the cytochrome b family. As to quaternary structure, the cytochrome bc1 complex contains 11 subunits: 3 respiratory subunits (MT-CYB, CYC1 and UQCRFS1), 2 core proteins (UQCRC1 and UQCRC2) and 6 low-molecular weight proteins (UQCRH/QCR6, UQCRB/QCR7, UQCRQ/QCR8, UQCR10/QCR9, UQCR11/QCR10 and a cleavage product of UQCRFS1). This cytochrome bc1 complex then forms a dimer. The cofactor is heme b.

It is found in the mitochondrion inner membrane. Component of the ubiquinol-cytochrome c reductase complex (complex III or cytochrome b-c1 complex) that is part of the mitochondrial respiratory chain. The b-c1 complex mediates electron transfer from ubiquinol to cytochrome c. Contributes to the generation of a proton gradient across the mitochondrial membrane that is then used for ATP synthesis. The sequence is that of Cytochrome b (MT-CYB) from Syrmaticus reevesii (Reeves's pheasant).